The sequence spans 204 residues: tRNA (guanine-N(7)-)-methyltransferase (204 aa).

S-adenosyl-L-methionine-binding residues include E36, E61, and D111. D111 is a catalytic residue. Substrate-binding positions include K115, D147, and 177 to 180 (TRFE).

It belongs to the class I-like SAM-binding methyltransferase superfamily. TrmB family.

The catalysed reaction is guanosine(46) in tRNA + S-adenosyl-L-methionine = N(7)-methylguanosine(46) in tRNA + S-adenosyl-L-homocysteine. The protein operates within tRNA modification; N(7)-methylguanine-tRNA biosynthesis. Its function is as follows. Catalyzes the formation of N(7)-methylguanine at position 46 (m7G46) in tRNA. The chain is tRNA (guanine-N(7)-)-methyltransferase from Chlorobium phaeobacteroides (strain DSM 266 / SMG 266 / 2430).